Here is a 149-residue protein sequence, read N- to C-terminus: Arginine repressor (149 aa).

It belongs to the ArgR family.

The protein localises to the cytoplasm. Its pathway is amino-acid biosynthesis; L-arginine biosynthesis [regulation]. Functionally, regulates arginine biosynthesis genes. The polypeptide is Arginine repressor (Alkaliphilus oremlandii (strain OhILAs) (Clostridium oremlandii (strain OhILAs))).